We begin with the raw amino-acid sequence, 309 residues long: Acetyl-coenzyme A carboxylase carboxyl transferase subunit beta (309 aa).

The CoA carboxyltransferase N-terminal domain occupies 29 to 298 (NSDWTSCCKG…AINSSENETS (270 aa)). Residues C35, C36, C52, and C55 each contribute to the Zn(2+) site.

Belongs to the AccD/PCCB family. As to quaternary structure, acetyl-CoA carboxylase is a heterohexamer composed of biotin carboxyl carrier protein (AccB), biotin carboxylase (AccC) and two subunits each of ACCase subunit alpha (AccA) and ACCase subunit beta (AccD). It depends on Zn(2+) as a cofactor.

The protein localises to the cytoplasm. The catalysed reaction is N(6)-carboxybiotinyl-L-lysyl-[protein] + acetyl-CoA = N(6)-biotinyl-L-lysyl-[protein] + malonyl-CoA. Its pathway is lipid metabolism; malonyl-CoA biosynthesis; malonyl-CoA from acetyl-CoA: step 1/1. Component of the acetyl coenzyme A carboxylase (ACC) complex. Biotin carboxylase (BC) catalyzes the carboxylation of biotin on its carrier protein (BCCP) and then the CO(2) group is transferred by the transcarboxylase to acetyl-CoA to form malonyl-CoA. The protein is Acetyl-coenzyme A carboxylase carboxyl transferase subunit beta of Pelagibacter ubique (strain HTCC1062).